The primary structure comprises 229 residues: PKHD-type hydroxylase RPA3479 (229 aa).

The Fe2OG dioxygenase domain occupies 78–180 (QIFPPLFNRY…RVASFFWLQS (103 aa)). Positions 98, 100, and 161 each coordinate Fe cation. Arginine 171 provides a ligand contact to 2-oxoglutarate.

Fe(2+) is required as a cofactor. It depends on L-ascorbate as a cofactor.

The chain is PKHD-type hydroxylase RPA3479 from Rhodopseudomonas palustris (strain ATCC BAA-98 / CGA009).